A 1210-amino-acid polypeptide reads, in one-letter code: Epidermal growth factor receptor (1210 aa).

Positions 1 to 24 are cleaved as a signal peptide; that stretch reads MRPSGTARTTLLVLLTALCAAGGA. The Extracellular segment spans residues 25–647; it reads LEEKKVCQGT…VWPSGPKIPS (623 aa). Residues Cys31 and Cys58 are joined by a disulfide bond. One copy of the Approximate repeat lies at 75–300; that stretch reads DLSFLKTIQE…CVKKCPRNYV (226 aa). 3 N-linked (GlcNAc...) asparagine glycosylation sites follow: Asn128, Asn175, and Asn196. Intrachain disulfides connect Cys157–Cys187, Cys190–Cys199, Cys194–Cys207, Cys215–Cys223, Cys219–Cys231, Cys232–Cys240, Cys236–Cys248, Cys251–Cys260, Cys264–Cys291, Cys295–Cys307, Cys311–Cys326, Cys329–Cys333, and Cys337–Cys362. A Phosphoserine modification is found at Ser229. Residues Asn352, Asn413, and Asn444 are each glycosylated (N-linked (GlcNAc...) asparagine). The Approximate repeat unit spans residues 390–600; sequence RELEILKTVK…CVKTCPAGIM (211 aa). Disulfide bonds link Cys470-Cys499, Cys506-Cys515, Cys510-Cys523, Cys526-Cys535, Cys539-Cys555, Cys558-Cys571, Cys562-Cys579, Cys582-Cys591, Cys595-Cys617, Cys620-Cys628, and Cys624-Cys636. N-linked (GlcNAc...) asparagine glycosylation occurs at Asn528. An N-linked (GlcNAc...) asparagine glycan is attached at Asn568. Residues Asn603 and Asn623 are each glycosylated (N-linked (GlcNAc...) asparagine). Residues 648–670 traverse the membrane as a helical segment; sequence IATGIVGGLLFIVVVALGIGLFM. At 671 to 1210 the chain is on the cytoplasmic side; the sequence is RRRHIVRKRT…APPSSEFIGA (540 aa). Thr680 is subject to Phosphothreonine; by PKC and PKD/PRKD1. Residues 690–706 are important for dimerization, phosphorylation and activation; sequence LVEPLTPSGEAPNQAHL. Thr695 is subject to Phosphothreonine; by PKD/PRKD1. Ser697 carries the post-translational modification Phosphoserine. The 268-residue stretch at 714-981 folds into the Protein kinase domain; the sequence is FKKIKVLGSG…KMARDPQRYL (268 aa). Residue Lys718 forms a Glycyl lysine isopeptide (Lys-Gly) (interchain with G-Cter in ubiquitin) linkage. Residue 720-728 participates in ATP binding; it reads LGSGAFGTV. Residue Lys739 forms a Glycyl lysine isopeptide (Lys-Gly) (interchain with G-Cter in ubiquitin) linkage. Lys747 contributes to the ATP binding site. Lys747 carries the post-translational modification N6-(2-hydroxyisobutyryl)lysine. Glycyl lysine isopeptide (Lys-Gly) (interchain with G-Cter in ubiquitin) cross-links involve residues Lys756 and Lys759. 792–793 is an ATP binding site; that stretch reads TQ. The active-site Proton acceptor is the Asp839. Asp857 provides a ligand contact to ATP. Lys869 participates in a covalent cross-link: Glycyl lysine isopeptide (Lys-Gly) (interchain with G-Cter in ubiquitin). Residue Tyr871 is modified to Phosphotyrosine. Residues Lys931, Lys962, and Lys972 each participate in a glycyl lysine isopeptide (Lys-Gly) (interchain with G-Cter in ubiquitin) cross-link. Phosphoserine is present on residues Ser993 and Ser997. Tyr1000 and Tyr1018 each carry phosphotyrosine; by autocatalysis. Phosphoserine is present on residues Ser1028 and Ser1041. Thr1043 is subject to Phosphothreonine. Position 1044 is a phosphoserine (Ser1044). A lipid anchor (S-palmitoyl cysteine) is attached at Cys1051. Tyr1069 carries the phosphotyrosine modification. A phosphoserine mark is found at Ser1070 and Ser1071. Phosphotyrosine; by autocatalysis occurs at positions 1092 and 1110. The tract at residues 1113–1137 is disordered; that stretch reads QPLHPAPGRDLHYQNPHSNAVGNPE. Polar residues predominate over residues 1127–1137; the sequence is NPHSNAVGNPE. A lipid anchor (S-palmitoyl cysteine) is attached at Cys1146. Position 1166 is a phosphoserine (Ser1166). At Tyr1172 the chain carries Phosphotyrosine; by autocatalysis. Tyr1197 carries the phosphotyrosine modification. Arg1199 is modified (omega-N-methylarginine).

Belongs to the protein kinase superfamily. Tyr protein kinase family. EGF receptor subfamily. As to quaternary structure, binding of the ligand triggers homo- and/or heterodimerization of the receptor triggering its autophosphorylation. Heterodimer with ERBB2. Forms a complex with CCDC88A/GIV (via SH2-like region) and GNAI3 which leads to enhanced EGFR signaling and triggering of cell migration; binding of CCDC88A requires autophosphorylation of the EGFR C-terminal region, and ligand stimulation is required for recruitment of GNAI3 to the complex. Interacts with ERRFI1; inhibits dimerization of the kinase domain and autophosphorylation. Part of a complex with ERBB2 and either PIK3C2A or PIK3C2B. Interacts with GRB2; an adapter protein coupling the receptor to downstream signaling pathways. Interacts with GAB2; involved in signaling downstream of EGFR. Interacts with STAT3; mediates EGFR downstream signaling in cell proliferation. Interacts with RIPK1; involved in NF-kappa-B activation. Interacts (autophosphorylated) with CBL, CBLB and CBLC; involved in EGFR ubiquitination and regulation; interaction with CBL is reduced in the presence of tensin TNS4. Interacts with SOCS5; regulates EGFR degradation through ELOC- and ELOB-mediated ubiquitination and proteasomal degradation. Interacts with PRMT5; methylates EGFR and enhances interaction with PTPN6. Interacts (phosphorylated) with PTPN6; inhibits EGFR-dependent activation of MAPK/ERK. Interacts with COPG1; essential for regulation of EGF-dependent nuclear transport of EGFR by retrograde trafficking from the Golgi to the ER. Interacts with TNK2; this interaction is dependent on EGF stimulation and kinase activity of EGFR. Interacts with PCNA; positively regulates PCNA. Interacts with PELP1. Interacts with MUC1. Interacts with AP2M1. Interacts with FER. Interacts (via SH2 domains) with GRB2, NCK1 and NCK2. Interacts with EPS8; mediates EPS8 phosphorylation. Interacts with ATXN2. Interacts with GAREM1. Interacts (ubiquitinated) with ANKRD13A/B/D; the interaction is direct and may regulate EGFR internalization after EGF stimulation. Interacts with GPER1; the interaction occurs in an estrogen-dependent manner. Interacts (via C-terminal cytoplasmic kinase domain) with ZPR1 (via zinc fingers). Interacts with RNF115 and RNF126. Interacts with GPRC5A (via its transmembrane domain). Interacts with FAM83B; positively regulates EGFR inducing its autophosphorylation in absence of stimulation by EGF. Interacts with LAPTM4B; positively correlates with EGFR activation. Interacts with STX19. Interacts with CD44. Interacts with PGRMC1; the interaction requires PGRMC1 homodimerization. Interacts with PIKFYVE. Interacts with NEU3. Interacts with TRAF4. Interacts with the ant venom OMEGA-myrmeciitoxin(02)-Mg1a. Interacts with CD82; this interaction facilitates ligand-induced endocytosis of the receptor and its subsequent desensitization. Monoubiquitinated and polyubiquitinated upon EGF stimulation; which does not affect tyrosine kinase activity or signaling capacity but may play a role in lysosomal targeting. Polyubiquitin linkage is mainly through 'Lys-63', but linkage through 'Lys-48', 'Lys-11' and 'Lys-29' also occurs. Deubiquitinated by OTUD7B, preventing degradation. Ubiquitinated by RNF115 and RNF126. Ubiquitinated by ZNRF1 or CBL at different lysines in response to EGF stimulation; leading to recruitment of the ESCRT machinery and subsequent degradation in the lysosomes. Deubiquitinated by UCHL1 leading to the inhibition of its degradation. In terms of processing, phosphorylated on Tyr residues in response to EGF. Phosphorylation at Ser-697 is partial and occurs only if Thr-695 is phosphorylated. Phosphorylation at Thr-680 and Thr-695 by PRKD1 inhibits EGF-induced MAPK8/JNK1 activation. Dephosphorylation by PTPRJ prevents endocytosis and stabilizes the receptor at the plasma membrane. Autophosphorylation at Tyr-1199 is stimulated by methylation at Arg-1199 and enhances interaction with PTPN6. Autophosphorylation at Tyr-1092 and/or Tyr-1110 recruits STAT3. Dephosphorylated by PTPN1 and PTPN2. Post-translationally, palmitoylated on Cys residues by ZDHHC20. Palmitoylation inhibits internalization after ligand binding, and increases the persistence of tyrosine-phosphorylated EGFR at the cell membrane. Palmitoylation increases the amplitude and duration of EGFR signaling. Methylated. Methylation at Arg-1199 by PRMT5 stimulates phosphorylation at Tyr-1197.

The protein resides in the cell membrane. Its subcellular location is the endoplasmic reticulum membrane. It is found in the golgi apparatus membrane. The protein localises to the nucleus membrane. It localises to the endosome. The protein resides in the endosome membrane. Its subcellular location is the nucleus. It carries out the reaction L-tyrosyl-[protein] + ATP = O-phospho-L-tyrosyl-[protein] + ADP + H(+). Its activity is regulated as follows. Endocytosis and inhibition of the activated EGFR by phosphatases like PTPRJ and PTPRK constitute immediate regulatory mechanisms. Upon EGF-binding phosphorylates EPS15 that regulates EGFR endocytosis and activity. Moreover, inducible feedback inhibitors including LRIG1, SOCS4, SOCS5 and ERRFI1 constitute alternative regulatory mechanisms for the EGFR signaling. In terms of biological role, receptor tyrosine kinase binding ligands of the EGF family and activating several signaling cascades to convert extracellular cues into appropriate cellular responses. Known ligands include EGF, TGFA/TGF-alpha, AREG, epigen/EPGN, BTC/betacellulin, epiregulin/EREG and HBEGF/heparin-binding EGF. Ligand binding triggers receptor homo- and/or heterodimerization and autophosphorylation on key cytoplasmic residues. The phosphorylated receptor recruits adapter proteins like GRB2 which in turn activates complex downstream signaling cascades. Activates at least 4 major downstream signaling cascades including the RAS-RAF-MEK-ERK, PI3 kinase-AKT, PLCgamma-PKC and STATs modules. May also activate the NF-kappa-B signaling cascade. Also directly phosphorylates other proteins like RGS16, activating its GTPase activity and probably coupling the EGF receptor signaling to the G protein-coupled receptor signaling. Also phosphorylates MUC1 and increases its interaction with SRC and CTNNB1/beta-catenin. Positively regulates cell migration via interaction with CCDC88A/GIV which retains EGFR at the cell membrane following ligand stimulation, promoting EGFR signaling which triggers cell migration. Plays a role in enhancing learning and memory performance. Plays a role in mammalian pain signaling (long-lasting hypersensitivity). This is Epidermal growth factor receptor from Mus musculus (Mouse).